Consider the following 285-residue polypeptide: Nucleotide-binding protein NTHI1314 (285 aa).

8-15 (GRSGAGKS) is an ATP binding site. Residue 56 to 59 (DIRN) participates in GTP binding.

It belongs to the RapZ-like family.

Functionally, displays ATPase and GTPase activities. This Haemophilus influenzae (strain 86-028NP) protein is Nucleotide-binding protein NTHI1314.